A 319-amino-acid chain; its full sequence is Ribonuclease Z (319 aa).

Zn(2+) contacts are provided by His62, His64, Asp66, His67, His139, Asp209, and His268. Residue Asp66 is the Proton acceptor of the active site.

It belongs to the RNase Z family. As to quaternary structure, homodimer. Zn(2+) is required as a cofactor.

The enzyme catalyses Endonucleolytic cleavage of RNA, removing extra 3' nucleotides from tRNA precursor, generating 3' termini of tRNAs. A 3'-hydroxy group is left at the tRNA terminus and a 5'-phosphoryl group is left at the trailer molecule.. Zinc phosphodiesterase, which displays some tRNA 3'-processing endonuclease activity. Probably involved in tRNA maturation, by removing a 3'-trailer from precursor tRNA. This Pseudomonas putida (strain ATCC 47054 / DSM 6125 / CFBP 8728 / NCIMB 11950 / KT2440) protein is Ribonuclease Z.